Consider the following 273-residue polypeptide: Shikimate dehydrogenase (NADP(+)) (273 aa).

Shikimate is bound by residues 15–17 (SKS) and T62. The active-site Proton acceptor is K66. Position 78 (E78) interacts with NADP(+). Residues N87 and D103 each coordinate shikimate. NADP(+)-binding positions include 127 to 131 (GAGGA), 151 to 156 (NRTHDK), and M214. Y216 contributes to the shikimate binding site. Position 238 (G238) interacts with NADP(+).

The protein belongs to the shikimate dehydrogenase family. Homodimer.

It carries out the reaction shikimate + NADP(+) = 3-dehydroshikimate + NADPH + H(+). It participates in metabolic intermediate biosynthesis; chorismate biosynthesis; chorismate from D-erythrose 4-phosphate and phosphoenolpyruvate: step 4/7. In terms of biological role, involved in the biosynthesis of the chorismate, which leads to the biosynthesis of aromatic amino acids. Catalyzes the reversible NADPH linked reduction of 3-dehydroshikimate (DHSA) to yield shikimate (SA). The protein is Shikimate dehydrogenase (NADP(+)) of Shewanella denitrificans (strain OS217 / ATCC BAA-1090 / DSM 15013).